A 506-amino-acid polypeptide reads, in one-letter code: Bone morphogenetic protein 6 (506 aa).

Positions 1–20 (MPGLGRRAQWLCWWWGLLCS) are cleaved as a signal peptide. A propeptide spanning residues 21-367 (CGPPPLRPPL…VSEVHVRTTR (347 aa)) is cleaved from the precursor. Disordered stretches follow at residues 44–64 (AGGS…SGFL), 87–125 (PHRP…RLKS), and 139–195 (KDDE…PLTS). Residues 96–112 (LQQPQSPVLPQQQQSQQ) are compositionally biased toward low complexity. Residues 140–153 (DDEEDGVSEGEGLE) show a composition bias toward acidic residues. N-linked (GlcNAc...) asparagine glycans are attached at residues asparagine 234, asparagine 262, asparagine 379, asparagine 397, and asparagine 447. The tract at residues 366-397 (TRSASSRRRQQSRNRSTQSQDVSRGSSASDYN) is disordered. Polar residues predominate over residues 386–397 (DVSRGSSASDYN). Cystine bridges form between cysteine 405/cysteine 471, cysteine 434/cysteine 503, and cysteine 438/cysteine 505.

The protein belongs to the TGF-beta family. As to quaternary structure, interacts with SOSTDC1. Interacts (when glycosylated) with type I receptor ACVR1; the interaction may induce HAMP expression. Interacts with type II receptor ACVR2B. Interacts with Hemojuvelin/HJV. Interacts with ERFE; the interaction inhibits BMP-induced transcription of HAMP. Interacts with BMPR1A/ALK3. Forms heterodimers with BMP2 in vitro; the heterodimer then binds to its receptor BMPR1A /ALK3 and may induce HAMP expression.

It is found in the secreted. Growth factor of the TGF-beta superfamily that plays essential roles in many developmental processes including cartilage and bone formation. Also plays an important role in the regulation of HAMP/hepcidin expression and iron metabolism by acting as a ligand for hemojuvelin/HJV. Also acts to promote expression of HAMP, potentially via the interaction with its receptor BMPR1A/ALK3. Initiates the canonical BMP signaling cascade by associating with type I receptor ACVR1 and type II receptor ACVR2B. In turn, ACVR1 propagates signal by phosphorylating SMAD1/5/8 that travel to the nucleus and act as activators and repressors of transcription of target. Can also signal through non-canonical pathway such as TAZ-Hippo signaling cascade to modulate VEGF signaling by regulating VEGFR2 expression. This is Bone morphogenetic protein 6 (Bmp6) from Rattus norvegicus (Rat).